The sequence spans 171 residues: 3-hydroxydecanoyl-[acyl-carrier-protein] dehydratase (171 aa).

Residue H70 is part of the active site.

This sequence belongs to the thioester dehydratase family. FabA subfamily. In terms of assembly, homodimer.

It is found in the cytoplasm. The enzyme catalyses a (3R)-hydroxyacyl-[ACP] = a (2E)-enoyl-[ACP] + H2O. It catalyses the reaction (3R)-hydroxydecanoyl-[ACP] = (2E)-decenoyl-[ACP] + H2O. The catalysed reaction is (2E)-decenoyl-[ACP] = (3Z)-decenoyl-[ACP]. It functions in the pathway lipid metabolism; fatty acid biosynthesis. Its function is as follows. Necessary for the introduction of cis unsaturation into fatty acids. Catalyzes the dehydration of (3R)-3-hydroxydecanoyl-ACP to E-(2)-decenoyl-ACP and then its isomerization to Z-(3)-decenoyl-ACP. Can catalyze the dehydratase reaction for beta-hydroxyacyl-ACPs with saturated chain lengths up to 16:0, being most active on intermediate chain length. This chain is 3-hydroxydecanoyl-[acyl-carrier-protein] dehydratase, found in Shewanella frigidimarina (strain NCIMB 400).